We begin with the raw amino-acid sequence, 365 residues long: Coxsackievirus and adenovirus receptor homolog (365 aa).

A signal peptide spans 1–19 (MALLLCFVLLCGVADFTSS). Ig-like C2-type domains follow at residues 20 to 136 (LSIT…FLLT) and 141 to 228 (PSGT…LRLD). The Extracellular segment spans residues 20 to 238 (LSITTPEQRI…VVPPSNRAGT (219 aa)). 3 disulfide bridges follow: cysteine 41–cysteine 120, cysteine 146–cysteine 223, and cysteine 162–cysteine 212. An N-linked (GlcNAc...) asparagine glycan is attached at asparagine 106. The helical transmembrane segment at 239–259 (IAGAVIGTLLALVLIGAILFC) threads the bilayer. S-palmitoyl cysteine attachment occurs at residues cysteine 259 and cysteine 260. Residues 260 to 365 (CHKKRREEKY…PAQSKDGSIV (106 aa)) are Cytoplasmic-facing. Basic and acidic residues predominate over residues 269–282 (YEKEVHHDIREDVP). A disordered region spans residues 269-315 (YEKEVHHDIREDVPPPKSRTSTARSYIGSNHSSLGSMSPSNMEGYSK). Positions 286–315 (SRTSTARSYIGSNHSSLGSMSPSNMEGYSK) are enriched in polar residues. A phosphoserine mark is found at serine 297, serine 304, serine 306, serine 323, serine 332, and serine 363. The PDZ-binding motif lies at 360–365 (KDGSIV).

As to quaternary structure, monomer. May form homodimer. Interacts with LNX, MAGI1, DLG4, PRKCABP, TJP1 and CTNNB1. Interacts with MPDZ; recruits MPDZ to intercellular contact sites. Interacts with JAML (homodimeric form). In terms of processing, N-glycosylated. Post-translationally, palmitoylated on Cys-259 and/or Cys-260; required for proper localization to the plasma membrane. Expressed in heart, brain, spleen, lung, liver, muscle, kidney, testis, spleen and skeletal muscle.

The protein resides in the cell membrane. Its subcellular location is the basolateral cell membrane. The protein localises to the cell junction. It is found in the tight junction. It localises to the adherens junction. In terms of biological role, component of the epithelial apical junction complex that may function as a homophilic cell adhesion molecule and is essential for tight junction integrity. Also involved in transepithelial migration of leukocytes through adhesive interactions with JAML a transmembrane protein of the plasma membrane of leukocytes. The interaction between both receptors also mediates the activation of gamma-delta T-cells, a subpopulation of T-cells residing in epithelia and involved in tissue homeostasis and repair. Upon epithelial CXADR-binding, JAML induces downstream cell signaling events in gamma-delta T-cells through PI3-kinase and MAP kinases. It results in proliferation and production of cytokines and growth factors by T-cells that in turn stimulate epithelial tissues repair. This is Coxsackievirus and adenovirus receptor homolog (Cxadr) from Rattus norvegicus (Rat).